Reading from the N-terminus, the 287-residue chain is MSDNLKIGLQYLTPKHALTRLAGKLASAKMGWLTTAVIKWFIKQYNVNMDEAKNPDPEAYSTFNNFFVRELEDGARPINEDGSVISHPADACVSQFGPIMDGKLVQAKGHVYSAQELLGGDETLAAEFMGGEFATLYLSPSDYHRVHMPCDATLRKMIYVPGDLFSVNPLTAENVPNLFARNERVVCIFDTEFGPMAQILVGATIVGSIETTWAETVTPPTGPAVKTWHYPLSGDDMICFKKGEEMGRFKLGSTVINLFAPNSIKFDDSMENGIPTRMGTPFAHIVK.

Active-site charge relay system; for autoendoproteolytic cleavage activity residues include Asp-90, His-147, and Ser-253. Residue Ser-253 is the Schiff-base intermediate with substrate; via pyruvic acid; for decarboxylase activity of the active site. Ser-253 carries the post-translational modification Pyruvic acid (Ser); by autocatalysis.

Belongs to the phosphatidylserine decarboxylase family. PSD-B subfamily. Prokaryotic type I sub-subfamily. Heterodimer of a large membrane-associated beta subunit and a small pyruvoyl-containing alpha subunit. The cofactor is pyruvate. Post-translationally, is synthesized initially as an inactive proenzyme. Formation of the active enzyme involves a self-maturation process in which the active site pyruvoyl group is generated from an internal serine residue via an autocatalytic post-translational modification. Two non-identical subunits are generated from the proenzyme in this reaction, and the pyruvate is formed at the N-terminus of the alpha chain, which is derived from the carboxyl end of the proenzyme. The autoendoproteolytic cleavage occurs by a canonical serine protease mechanism, in which the side chain hydroxyl group of the serine supplies its oxygen atom to form the C-terminus of the beta chain, while the remainder of the serine residue undergoes an oxidative deamination to produce ammonia and the pyruvoyl prosthetic group on the alpha chain. During this reaction, the Ser that is part of the protease active site of the proenzyme becomes the pyruvoyl prosthetic group, which constitutes an essential element of the active site of the mature decarboxylase.

The protein resides in the cell membrane. The catalysed reaction is a 1,2-diacyl-sn-glycero-3-phospho-L-serine + H(+) = a 1,2-diacyl-sn-glycero-3-phosphoethanolamine + CO2. It participates in phospholipid metabolism; phosphatidylethanolamine biosynthesis; phosphatidylethanolamine from CDP-diacylglycerol: step 2/2. Catalyzes the formation of phosphatidylethanolamine (PtdEtn) from phosphatidylserine (PtdSer). The protein is Phosphatidylserine decarboxylase proenzyme of Aliivibrio fischeri (strain MJ11) (Vibrio fischeri).